The chain runs to 184 residues: Photosystem I assembly protein Ycf4 (184 aa).

A run of 2 helical transmembrane segments spans residues 22-42 and 57-77; these read FCWAIILFLGSLGFLLIGISS and IIFFPQGLVMSFYGLAGLFIS.

Belongs to the Ycf4 family.

The protein localises to the plastid. Its subcellular location is the chloroplast thylakoid membrane. Seems to be required for the assembly of the photosystem I complex. The chain is Photosystem I assembly protein Ycf4 from Populus alba (White poplar).